The chain runs to 496 residues: ATP synthase subunit beta (496 aa).

Residue 155–162 coordinates ATP; sequence GGAGVGKT.

The protein belongs to the ATPase alpha/beta chains family. F-type ATPases have 2 components, CF(1) - the catalytic core - and CF(0) - the membrane proton channel. CF(1) has five subunits: alpha(3), beta(3), gamma(1), delta(1), epsilon(1). CF(0) has three main subunits: a(1), b(2) and c(9-12). The alpha and beta chains form an alternating ring which encloses part of the gamma chain. CF(1) is attached to CF(0) by a central stalk formed by the gamma and epsilon chains, while a peripheral stalk is formed by the delta and b chains.

Its subcellular location is the cell membrane. It catalyses the reaction ATP + H2O + 4 H(+)(in) = ADP + phosphate + 5 H(+)(out). Its function is as follows. Produces ATP from ADP in the presence of a proton gradient across the membrane. The catalytic sites are hosted primarily by the beta subunits. This Karelsulcia muelleri (strain GWSS) (Sulcia muelleri) protein is ATP synthase subunit beta.